The primary structure comprises 329 residues: Ankyrin repeat and SOCS box protein 5 (329 aa).

6 ANK repeats span residues 69–98 (ADRS…NVNA), 102–131 (DHVT…NVNA), 135–164 (DGVT…KPQL), 167–196 (CLPS…DVDQ), 200–229 (HLGT…DVQK), and 232–261 (YWDT…DINA). In terms of domain architecture, SOCS box spans 278 to 329 (LVERLLLQHEATPSSLCQLCRLCIRNYIGRPRLHLIPQLQLPTLLQNFLQYR).

Belongs to the ankyrin SOCS box (ASB) family.

The protein operates within protein modification; protein ubiquitination. Functionally, may be a substrate-recognition component of a SCF-like ECS (Elongin-Cullin-SOCS-box protein) E3 ubiquitin-protein ligase complex which mediates the ubiquitination and subsequent proteasomal degradation of target proteins. May play a role in the initiation of arteriogenesis. The protein is Ankyrin repeat and SOCS box protein 5 (ASB5) of Bos taurus (Bovine).